Reading from the N-terminus, the 55-residue chain is Large ribosomal subunit protein bL33B (55 aa).

This sequence belongs to the bacterial ribosomal protein bL33 family.

The chain is Large ribosomal subunit protein bL33B from Kineococcus radiotolerans (strain ATCC BAA-149 / DSM 14245 / SRS30216).